The following is a 511-amino-acid chain: Exodeoxyribonuclease 7 large subunit (511 aa).

The protein belongs to the XseA family. As to quaternary structure, heterooligomer composed of large and small subunits.

It localises to the cytoplasm. The catalysed reaction is Exonucleolytic cleavage in either 5'- to 3'- or 3'- to 5'-direction to yield nucleoside 5'-phosphates.. Its function is as follows. Bidirectionally degrades single-stranded DNA into large acid-insoluble oligonucleotides, which are then degraded further into small acid-soluble oligonucleotides. The polypeptide is Exodeoxyribonuclease 7 large subunit (Brucella suis (strain ATCC 23445 / NCTC 10510)).